We begin with the raw amino-acid sequence, 278 residues long: Probable septum site-determining protein MinC (278 aa).

Belongs to the MinC family. As to quaternary structure, interacts with MinD and FtsZ.

Its function is as follows. Cell division inhibitor that blocks the formation of polar Z ring septums. Rapidly oscillates between the poles of the cell to destabilize FtsZ filaments that have formed before they mature into polar Z rings. Prevents FtsZ polymerization. This Gloeobacter violaceus (strain ATCC 29082 / PCC 7421) protein is Probable septum site-determining protein MinC.